The chain runs to 906 residues: Catenin alpha-1 (906 aa).

T2 is modified (N-acetylthreonine). The segment at 2–228 (TAVHAGNINF…PILYTASQAC (227 aa)) is involved in homodimerization. K57 is covalently cross-linked (Glycyl lysine isopeptide (Lys-Gly) (interchain with G-Cter in SUMO2)). The tract at residues 97 to 148 (VRKQGDLMKAAAGEFADDPCSSVKRGNMVRAARALLSAVTRLLILADMADVY) is interaction with JUP and CTNNB1. S264, S268, S295, and S297 each carry phosphoserine. Positions 325 to 394 (TRDDRRERIV…AVMDHVSDSF (70 aa)) are interaction with alpha-actinin. The residue at position 634 (T634) is a Phosphothreonine. S641 is subject to Phosphoserine; by CK2. The residue at position 645 (T645) is a Phosphothreonine. S652 and S655 each carry phosphoserine; by CK1. Residue T658 is modified to Phosphothreonine; by CK1. K797 participates in a covalent cross-link: Glycyl lysine isopeptide (Lys-Gly) (interchain with G-Cter in SUMO2). The residue at position 851 (S851) is a Phosphoserine. Over residues 864–880 (PEKKPLVKREKQDETQT) the composition is skewed to basic and acidic residues. The interval 864–894 (PEKKPLVKREKQDETQTKIKRASQKKHVNPV) is disordered. Over residues 881 to 891 (KIKRASQKKHV) the composition is skewed to basic residues.

It belongs to the vinculin/alpha-catenin family. Monomer and homodimer; the monomer preferentially binds to CTNNB1 and the homodimer to actin. Component of an cadherin:catenin adhesion complex composed of at least of CDH26, beta-catenin/CTNNB1, alpha-catenin/CTNNA1 and p120 catenin/CTNND1. Possible component of an E-cadherin/ catenin adhesion complex together with E-cadherin/CDH1 and beta-catenin/CTNNB1 or gamma-catenin/JUP; the complex is located to adherens junctions. The stable association of CTNNA1 is controversial as CTNNA1 was shown not to bind to F-actin when assembled in the complex. Alternatively, the CTNNA1-containing complex may be linked to F-actin by other proteins such as LIMA1. Binds AFDN and F-actin. Interacts with ARHGAP21. Interacts with AJUBA. Interacts with LIMA1. Interacts with vinculin/VCL. Interacts with TJP2/ZO2 (via N-terminus). Interacts with TJP1/ZO1 (via N-terminus). In terms of processing, sumoylated. Post-translationally, phosphorylation seems to contribute to the strength of cell-cell adhesion rather than to the basic capacity for cell-cell adhesion. As to expression, ubiquitously expressed in normal tissues. Abundantly expressed in brain and cerebellum, also expressed in the placenta, liver, lung, colon, heart, pancreas, stomach and thymus.

The protein localises to the cytoplasm. It localises to the cytoskeleton. The protein resides in the cell junction. It is found in the adherens junction. Its subcellular location is the cell membrane. The protein localises to the nucleus. In terms of biological role, associates with the cytoplasmic domain of a variety of cadherins. The association of catenins to cadherins produces a complex which is linked to the actin filament network, and which seems to be of primary importance for cadherins cell-adhesion properties. Can associate with both E- and N-cadherins. Originally believed to be a stable component of E-cadherin/catenin adhesion complexes and to mediate the linkage of cadherins to the actin cytoskeleton at adherens junctions. In contrast, cortical actin was found to be much more dynamic than E-cadherin/catenin complexes and CTNNA1 was shown not to bind to F-actin when assembled in the complex suggesting a different linkage between actin and adherens junctions components. The homodimeric form may regulate actin filament assembly and inhibit actin branching by competing with the Arp2/3 complex for binding to actin filaments. Involved in the regulation of WWTR1/TAZ, YAP1 and TGFB1-dependent SMAD2 and SMAD3 nuclear accumulation. May play a crucial role in cell differentiation. The chain is Catenin alpha-1 from Homo sapiens (Human).